The chain runs to 492 residues: Histone-lysine N-methyltransferase ASHH1 (492 aa).

The 52-residue stretch at 36–87 (EDISICECKFDFGDPDSACGERCLNVITNTECTPGYCPCGVYCKNQKFQKCE) folds into the AWS domain. The SET domain maps to 84 to 206 (QKCEYAKTKL…PRTELAYDYN (123 aa)). The Post-SET domain occupies 213–229 (AKVRCLCGAVACSGFLG). A disordered region spans residues 259-340 (SAEDELTSEP…NSQEDSSPKT (82 aa)). The span at 266 to 275 (SEPSKNGESN) shows a compositional bias: polar residues. Over residues 277 to 290 (NEEKEKDISTENHL) the composition is skewed to basic and acidic residues. Over residues 291–306 (ESTALNIQQQSDSTPT) the composition is skewed to polar residues. Basic and acidic residues predominate over residues 317–326 (VKTETSEDMK). Polar residues predominate over residues 328–339 (LSQNSQEDSSPK).

Belongs to the class V-like SAM-binding methyltransferase superfamily. Histone-lysine methyltransferase family. SET2 subfamily.

Its subcellular location is the nucleus. The protein resides in the chromosome. The protein localises to the centromere. It carries out the reaction L-lysyl(4)-[histone H3] + 3 S-adenosyl-L-methionine = N(6),N(6),N(6)-trimethyl-L-lysyl(4)-[histone H3] + 3 S-adenosyl-L-homocysteine + 3 H(+). In terms of biological role, histone methyltransferase involved in regulation of flowering time. Required for the expression of the SOC1/AGL20 gene. Required for histone H3 trimethylation on 'Lys-4' (H3K4me3) at the SOC1 locus. Prevents trimethylation on 'Lys-27' (H3K27me3) at the same locus. The polypeptide is Histone-lysine N-methyltransferase ASHH1 (ASHH1) (Arabidopsis thaliana (Mouse-ear cress)).